The sequence spans 130 residues: U-scoloptoxin(17)-Er1a (130 aa).

A signal peptide spans 1-18 (MKLLVFALFLQVVQLSLA).

Belongs to the scoloptoxin-17 family. Contains 4 disulfide bonds. In terms of tissue distribution, expressed by the venom gland.

Its subcellular location is the secreted. The chain is U-scoloptoxin(17)-Er1a from Ethmostigmus rubripes (Giant centipede).